Reading from the N-terminus, the 658-residue chain is Glycogen debranching enzyme (658 aa).

Residue Asp336 is the Nucleophile of the active site. Residue Glu371 is the Proton donor of the active site. The interval 459-484 is disordered; that stretch reads EANGEENRDGTNSNYSDNHGKEGLGG.

The protein belongs to the glycosyl hydrolase 13 family.

It carries out the reaction Hydrolysis of (1-&gt;6)-alpha-D-glucosidic linkages to branches with degrees of polymerization of three or four glucose residues in limit dextrin.. Its pathway is glycan degradation; glycogen degradation. Its function is as follows. Removes maltotriose and maltotetraose chains that are attached by 1,6-alpha-linkage to the limit dextrin main chain, generating a debranched limit dextrin. The chain is Glycogen debranching enzyme from Salmonella paratyphi A (strain ATCC 9150 / SARB42).